A 120-amino-acid polypeptide reads, in one-letter code: NAD(P)H-quinone oxidoreductase subunit 3, chloroplastic (120 aa).

Helical transmembrane passes span 9–29 (IFWAFLIISIFIPILAFTISG), 64–84 (MFALVFVVFDVETVFLYPWAM), and 88–108 (VLGISVFIEALIFVLILIVGS).

It belongs to the complex I subunit 3 family. As to quaternary structure, NDH is composed of at least 16 different subunits, 5 of which are encoded in the nucleus.

Its subcellular location is the plastid. The protein resides in the chloroplast thylakoid membrane. It carries out the reaction a plastoquinone + NADH + (n+1) H(+)(in) = a plastoquinol + NAD(+) + n H(+)(out). The enzyme catalyses a plastoquinone + NADPH + (n+1) H(+)(in) = a plastoquinol + NADP(+) + n H(+)(out). Its function is as follows. NDH shuttles electrons from NAD(P)H:plastoquinone, via FMN and iron-sulfur (Fe-S) centers, to quinones in the photosynthetic chain and possibly in a chloroplast respiratory chain. The immediate electron acceptor for the enzyme in this species is believed to be plastoquinone. Couples the redox reaction to proton translocation, and thus conserves the redox energy in a proton gradient. The chain is NAD(P)H-quinone oxidoreductase subunit 3, chloroplastic from Lotus japonicus (Lotus corniculatus var. japonicus).